The sequence spans 636 residues: Protein meg-1 (636 aa).

Polar residues-rich tracts occupy residues 1–13 (MDNR…NGNF), 38–54 (SSGN…NQQQ), and 292–355 (LSMN…QYNH). 4 disordered regions span residues 1–54 (MDNR…NQQQ), 289–367 (LFNL…APHL), 484–504 (SDVA…SMYI), and 521–542 (LDSS…KTPS). S574 is subject to Phosphoserine; by mbk-2. The segment at 591 to 636 (MSQSFLHQQDDEAPDCTKNVHSESDLKQAEPQESDKQSDKELPSNE) is disordered. A compositionally biased stretch (basic and acidic residues) spans 608–636 (KNVHSESDLKQAEPQESDKQSDKELPSNE).

Interacts with pptr-1, pptr-2 and pgl-1. In terms of processing, phosphorylated by mbk-2, which promotes the disassembly of zygotic P granules in the anterior cytoplasm of pre-gastrulation embryos. Dephosphorylated by a phosphatase complex containing the PP2A regulatory subunit pptr-1, which promotes the assembly and accumulation of zygotic P granules in the posterior cytoplasm of pre-gastrulation embryos. As to expression, not expressed in the adult germline or in any somatic tissues.

The protein resides in the cytoplasmic granule. P granule component, which acts redundantly with P granule component meg-2 to promote P granule segregation during embryogenesis, and germ cell proliferation and differentiation in larval stages. In its phosphorylated form, and together with meg-2, promotes the disassembly of zygotic P granules in the anterior cytoplasm of pre-gastrulation embryos. In its dephosphorylated form, and together with meg-2, promotes the assembly and accumulation of zygotic P granules in the posterior cytoplasm of pre-gastrulation embryos. May function with the nanos family members nos-2 and nos-3 to promote germ cell proliferation during larval development. Required for fertility. The polypeptide is Protein meg-1 (Caenorhabditis elegans).